We begin with the raw amino-acid sequence, 364 residues long: Methylthioribose-1-phosphate isomerase (364 aa).

Residues 49–51 (RGA), R89, and Q201 each bind substrate. The active-site Proton donor is D242. 252-253 (NK) is a binding site for substrate.

The protein belongs to the eIF-2B alpha/beta/delta subunits family. MtnA subfamily.

It catalyses the reaction 5-(methylsulfanyl)-alpha-D-ribose 1-phosphate = 5-(methylsulfanyl)-D-ribulose 1-phosphate. It functions in the pathway amino-acid biosynthesis; L-methionine biosynthesis via salvage pathway; L-methionine from S-methyl-5-thio-alpha-D-ribose 1-phosphate: step 1/6. Functionally, catalyzes the interconversion of methylthioribose-1-phosphate (MTR-1-P) into methylthioribulose-1-phosphate (MTRu-1-P). The sequence is that of Methylthioribose-1-phosphate isomerase from Leptospira interrogans serogroup Icterohaemorrhagiae serovar Lai (strain 56601).